The following is a 457-amino-acid chain: G-protein coupled receptor 135 (457 aa).

Positions 1–26 are disordered; that stretch reads MEEQARPPGRPAASATLQGSAHPGGA. The Extracellular portion of the chain corresponds to 1–64; it reads MEEQARPPGR…EAAGSRGPAP (64 aa). Asparagine 47 carries N-linked (GlcNAc...) asparagine glycosylation. A helical transmembrane segment spans residues 65–85; that stretch reads LLWHGAAVAAQALVLLLIFLL. The Cytoplasmic portion of the chain corresponds to 86 to 109; sequence SSLGNCAVMGVIVKHRQLRTVTNA. Residues 110–130 form a helical membrane-spanning segment; that stretch reads FILSLSLSDLLTALLCLPAAF. Residues 131 to 156 are Extracellular-facing; the sequence is LDLFAPPGDSGPWRSFCAASRFFSSC. The helical transmembrane segment at 157-177 threads the bilayer; it reads FGIVSTFSVALISLDRYCAIV. The Cytoplasmic segment spans residues 178 to 189; sequence RPPRDKLGRRRA. The chain crosses the membrane as a helical span at residues 190–210; that stretch reads LQLLAGAWLAALGFSLPWDLL. The Extracellular portion of the chain corresponds to 211–235; it reads RAPREPPAPQSFHRCLYRTSPDPAQ. The chain crosses the membrane as a helical span at residues 236-256; that stretch reads LGVAYSVGLVVACYLLPFLLM. At 257–295 the chain is on the cytoplasmic side; sequence CFCRYHICKTVRLSDVRVRPMTTYARVLRFFSEVRTATT. Residues 296–316 form a helical membrane-spanning segment; that stretch reads VLIMIIFVMCCWGPYCFLVLL. Topologically, residues 317–329 are extracellular; the sequence is AATRQGQATQAPS. The helical transmembrane segment at 330–350 threads the bilayer; the sequence is LLNVAAVWLTWANGAINPVIY. The Cytoplasmic portion of the chain corresponds to 351 to 457; that stretch reads AIRNPNISML…HNSETRDSSI (107 aa).

Belongs to the G-protein coupled receptor 1 family. As to quaternary structure, interacts with MTNR1B. Interacts with ARRB1 and ARRB2 in a spontaneous and agonist-independent manner; leading to the internalization of GPR135 in the endosomal compartment.

It is found in the cell membrane. The protein localises to the endosome membrane. Its function is as follows. Orphan receptor. Has spontaneous activity for beta-arrestin recruitment. Shows a reciprocal regulatory interaction with the melatonin receptor MTNR1B most likely through receptor heteromerization. The sequence is that of G-protein coupled receptor 135 (Gpr135) from Mus musculus (Mouse).